The sequence spans 1420 residues: DNA-directed RNA polymerase subunit beta' (1420 aa).

Positions 70, 72, 85, and 88 each coordinate Zn(2+). Positions 464, 466, and 468 each coordinate Mg(2+). Zn(2+)-binding residues include C823, C897, C904, and C907.

This sequence belongs to the RNA polymerase beta' chain family. The RNAP catalytic core consists of 2 alpha, 1 beta, 1 beta' and 1 omega subunit. When a sigma factor is associated with the core the holoenzyme is formed, which can initiate transcription. The cofactor is Mg(2+). Zn(2+) serves as cofactor.

The enzyme catalyses RNA(n) + a ribonucleoside 5'-triphosphate = RNA(n+1) + diphosphate. Its function is as follows. DNA-dependent RNA polymerase catalyzes the transcription of DNA into RNA using the four ribonucleoside triphosphates as substrates. The polypeptide is DNA-directed RNA polymerase subunit beta' (Polynucleobacter asymbioticus (strain DSM 18221 / CIP 109841 / QLW-P1DMWA-1) (Polynucleobacter necessarius subsp. asymbioticus)).